The primary structure comprises 139 residues: ATP synthase epsilon chain (139 aa).

The protein belongs to the ATPase epsilon chain family. F-type ATPases have 2 components, CF(1) - the catalytic core - and CF(0) - the membrane proton channel. CF(1) has five subunits: alpha(3), beta(3), gamma(1), delta(1), epsilon(1). CF(0) has three main subunits: a, b and c.

The protein localises to the cell inner membrane. Produces ATP from ADP in the presence of a proton gradient across the membrane. The polypeptide is ATP synthase epsilon chain (Acinetobacter baumannii (strain AB307-0294)).